Consider the following 382-residue polypeptide: Transcription termination/antitermination protein NusA (382 aa).

In terms of domain architecture, S1 motif spans 135-199; the sequence is EDIMTGIVQR…KGPQIMISRT (65 aa). One can recognise a KH domain in the interval 301 to 367; the sequence is EKTTQVIVPD…TLALDQETAD (67 aa). Residues 348–382 are disordered; the sequence is LLEDEAASHETLALDQETADQPEATVETSKNHEEE.

The protein belongs to the NusA family. Monomer. Binds directly to the core enzyme of the DNA-dependent RNA polymerase and to nascent RNA.

The protein resides in the cytoplasm. Functionally, participates in both transcription termination and antitermination. The chain is Transcription termination/antitermination protein NusA from Halalkalibacterium halodurans (strain ATCC BAA-125 / DSM 18197 / FERM 7344 / JCM 9153 / C-125) (Bacillus halodurans).